The sequence spans 652 residues: Acetyl-coenzyme A synthetase (652 aa).

CoA contacts are provided by residues 189 to 192 (RGGK), Thr-311, and Asn-335. ATP contacts are provided by residues 387–389 (GEP), 411–416 (DTWWQT), Asp-500, and Arg-515. Ser-523 provides a ligand contact to CoA. Arg-526 is an ATP binding site. Residues Val-537, His-539, and Val-542 each coordinate Mg(2+). Arg-584 lines the CoA pocket. An N6-acetyllysine modification is found at Lys-609.

The protein belongs to the ATP-dependent AMP-binding enzyme family. It depends on Mg(2+) as a cofactor. In terms of processing, acetylated. Deacetylation by the SIR2-homolog deacetylase activates the enzyme.

The catalysed reaction is acetate + ATP + CoA = acetyl-CoA + AMP + diphosphate. Its function is as follows. Catalyzes the conversion of acetate into acetyl-CoA (AcCoA), an essential intermediate at the junction of anabolic and catabolic pathways. AcsA undergoes a two-step reaction. In the first half reaction, AcsA combines acetate with ATP to form acetyl-adenylate (AcAMP) intermediate. In the second half reaction, it can then transfer the acetyl group from AcAMP to the sulfhydryl group of CoA, forming the product AcCoA. In Rhizobium rhizogenes (strain K84 / ATCC BAA-868) (Agrobacterium radiobacter), this protein is Acetyl-coenzyme A synthetase.